Reading from the N-terminus, the 443-residue chain is Ribosomal protein uS12 methylthiotransferase RimO (443 aa).

The MTTase N-terminal domain maps to 11 to 121 (PTVGFVSLGC…VMEAVHGALP (111 aa)). Residues C20, C56, C85, C152, C156, and C159 each contribute to the [4Fe-4S] cluster site. The region spanning 138-375 (LTPRHYAYLK…METQAEISAA (238 aa)) is the Radical SAM core domain. The 66-residue stretch at 378-443 (DAKIGRTIEV…DAHDLWATPV (66 aa)) folds into the TRAM domain.

The protein belongs to the methylthiotransferase family. RimO subfamily. It depends on [4Fe-4S] cluster as a cofactor.

It localises to the cytoplasm. The catalysed reaction is L-aspartate(89)-[ribosomal protein uS12]-hydrogen + (sulfur carrier)-SH + AH2 + 2 S-adenosyl-L-methionine = 3-methylsulfanyl-L-aspartate(89)-[ribosomal protein uS12]-hydrogen + (sulfur carrier)-H + 5'-deoxyadenosine + L-methionine + A + S-adenosyl-L-homocysteine + 2 H(+). Catalyzes the methylthiolation of an aspartic acid residue of ribosomal protein uS12. The protein is Ribosomal protein uS12 methylthiotransferase RimO of Thiobacillus denitrificans (strain ATCC 25259 / T1).